Here is a 361-residue protein sequence, read N- to C-terminus: Histidine biosynthesis bifunctional protein HisB (361 aa).

Residues 1–172 form a histidinol-phosphatase region; sequence MTQPTLFIDR…PKTTACKRPP (172 aa). Residue aspartate 9 is the Nucleophile of the active site. Mg(2+) is bound by residues aspartate 9 and aspartate 11. Catalysis depends on aspartate 11, which acts as the Proton donor. Zn(2+) contacts are provided by cysteine 92, histidine 94, cysteine 100, and cysteine 102. Aspartate 129 serves as a coordination point for Mg(2+). An imidazoleglycerol-phosphate dehydratase region spans residues 173–361; the sequence is RYAEVVRTTK…NELPSSKGVL (189 aa).

It in the N-terminal section; belongs to the histidinol-phosphatase family. The protein in the C-terminal section; belongs to the imidazoleglycerol-phosphate dehydratase family. The cofactor is Mg(2+). Requires Zn(2+) as cofactor.

It is found in the cytoplasm. The catalysed reaction is D-erythro-1-(imidazol-4-yl)glycerol 3-phosphate = 3-(imidazol-4-yl)-2-oxopropyl phosphate + H2O. The enzyme catalyses L-histidinol phosphate + H2O = L-histidinol + phosphate. It participates in amino-acid biosynthesis; L-histidine biosynthesis; L-histidine from 5-phospho-alpha-D-ribose 1-diphosphate: step 6/9. Its pathway is amino-acid biosynthesis; L-histidine biosynthesis; L-histidine from 5-phospho-alpha-D-ribose 1-diphosphate: step 8/9. This Actinobacillus pleuropneumoniae serotype 3 (strain JL03) protein is Histidine biosynthesis bifunctional protein HisB.